Here is a 222-residue protein sequence, read N- to C-terminus: DNA mismatch repair protein MutH (222 aa).

Belongs to the MutH family.

It localises to the cytoplasm. Functionally, sequence-specific endonuclease that cleaves unmethylated GATC sequences. It is involved in DNA mismatch repair. The chain is DNA mismatch repair protein MutH from Pasteurella multocida (strain Pm70).